The chain runs to 282 residues: MATYLIGDVHGCYDELIALLQQVEFTPETDTLWLTGDLVARGPGSLDVLRYVKSLGDSVRLVLGNHDLHLLAVFAGISRNKPKDRLTPLLEAPDADELLNWLRRQPLLQVDEEKKLVMAHAGITPQWDLQTAKECARDVEAVLSSDSYPFFLDAMYGDMPNNWSPELSGLARLRFITNAFTRMRYCFPNGQLDMYSKASPENAPAPLKPWFAIPGPVSEAYSIAFGHWASLDGKGTPDGIYALDTGCCWGGKLTCLRWEDKQYFVQPSNRQMDMGEGEAINA.

This sequence belongs to the Ap4A hydrolase family.

The enzyme catalyses P(1),P(4)-bis(5'-adenosyl) tetraphosphate + H2O = 2 ADP + 2 H(+). In terms of biological role, hydrolyzes diadenosine 5',5'''-P1,P4-tetraphosphate to yield ADP. This Salmonella arizonae (strain ATCC BAA-731 / CDC346-86 / RSK2980) protein is Bis(5'-nucleosyl)-tetraphosphatase, symmetrical.